We begin with the raw amino-acid sequence, 282 residues long: Elongation factor Ts (282 aa).

An involved in Mg(2+) ion dislocation from EF-Tu region spans residues 79–82; that stretch reads TDFV.

The protein belongs to the EF-Ts family.

Its subcellular location is the cytoplasm. In terms of biological role, associates with the EF-Tu.GDP complex and induces the exchange of GDP to GTP. It remains bound to the aminoacyl-tRNA.EF-Tu.GTP complex up to the GTP hydrolysis stage on the ribosome. This Colwellia psychrerythraea (strain 34H / ATCC BAA-681) (Vibrio psychroerythus) protein is Elongation factor Ts.